Reading from the N-terminus, the 296-residue chain is Lipoyl synthase (296 aa).

C35, C40, C46, C61, C65, C68, and S274 together coordinate [4Fe-4S] cluster. In terms of domain architecture, Radical SAM core spans W47–L263.

It belongs to the radical SAM superfamily. Lipoyl synthase family. It depends on [4Fe-4S] cluster as a cofactor.

It localises to the cytoplasm. It catalyses the reaction [[Fe-S] cluster scaffold protein carrying a second [4Fe-4S](2+) cluster] + N(6)-octanoyl-L-lysyl-[protein] + 2 oxidized [2Fe-2S]-[ferredoxin] + 2 S-adenosyl-L-methionine + 4 H(+) = [[Fe-S] cluster scaffold protein] + N(6)-[(R)-dihydrolipoyl]-L-lysyl-[protein] + 4 Fe(3+) + 2 hydrogen sulfide + 2 5'-deoxyadenosine + 2 L-methionine + 2 reduced [2Fe-2S]-[ferredoxin]. Its pathway is protein modification; protein lipoylation via endogenous pathway; protein N(6)-(lipoyl)lysine from octanoyl-[acyl-carrier-protein]: step 2/2. Functionally, catalyzes the radical-mediated insertion of two sulfur atoms into the C-6 and C-8 positions of the octanoyl moiety bound to the lipoyl domains of lipoate-dependent enzymes, thereby converting the octanoylated domains into lipoylated derivatives. This Neorickettsia sennetsu (strain ATCC VR-367 / Miyayama) (Ehrlichia sennetsu) protein is Lipoyl synthase.